The following is a 333-amino-acid chain: NADH-quinone oxidoreductase subunit H (333 aa).

A run of 8 helical transmembrane segments spans residues 8–28 (VLAA…YLVW), 75–95 (ILFM…FVTI), 108–128 (IGLL…LLAG), 154–174 (MLIT…IEIV), 191–211 (PGLF…CSLA), 251–271 (IVIG…CPFG), 273–293 (FPGV…FIWI), and 312–332 (ILIP…KVFA).

This sequence belongs to the complex I subunit 1 family. As to quaternary structure, NDH-1 is composed of 14 different subunits. Subunits NuoA, H, J, K, L, M, N constitute the membrane sector of the complex.

The protein localises to the cell inner membrane. It catalyses the reaction a quinone + NADH + 5 H(+)(in) = a quinol + NAD(+) + 4 H(+)(out). Functionally, NDH-1 shuttles electrons from NADH, via FMN and iron-sulfur (Fe-S) centers, to quinones in the respiratory chain. The immediate electron acceptor for the enzyme in this species is believed to be ubiquinone. Couples the redox reaction to proton translocation (for every two electrons transferred, four hydrogen ions are translocated across the cytoplasmic membrane), and thus conserves the redox energy in a proton gradient. This subunit may bind ubiquinone. This Desulfotalea psychrophila (strain LSv54 / DSM 12343) protein is NADH-quinone oxidoreductase subunit H.